The chain runs to 800 residues: N,N'-diacetylchitobiose phosphorylase (800 aa).

N-acetyl-alpha-D-glucosamine 1-phosphate contacts are provided by Arg-333, Arg-343, Arg-349, Asp-350, Trp-490, and Asp-492. Residue Asp-492 is the Proton donor of the active site. N-acetyl-D-glucosamine is bound by residues Asp-492, Lys-636, and Glu-637. N-acetyl-alpha-D-glucosamine 1-phosphate-binding residues include Glu-637, His-644, Gln-690, Thr-709, and Gly-710.

The protein belongs to the glycosyl hydrolase 94 family. In terms of assembly, homodimer.

It catalyses the reaction N,N'-diacetylchitobiose + phosphate = N-acetyl-alpha-D-glucosamine 1-phosphate + N-acetyl-D-glucosamine. Its function is as follows. Catalyzes the reversible phosphorolysis of chitobiose (N,N'-diacetylchitobiose or (GlcNAc)(2)) into N-acetyl-alpha-D-glucosamine 1-phosphate (GlcNAc-1-P) and N-acetyl-D-glucosamine (GlcNAc) with inversion of the anomeric configuration. The polypeptide is N,N'-diacetylchitobiose phosphorylase (Vibrio furnissii).